The primary structure comprises 174 residues: Methylated-DNA--protein-cysteine methyltransferase (174 aa).

Cysteine 141 functions as the Nucleophile; methyl group acceptor in the catalytic mechanism.

Belongs to the MGMT family.

Its subcellular location is the cytoplasm. It catalyses the reaction a 6-O-methyl-2'-deoxyguanosine in DNA + L-cysteinyl-[protein] = S-methyl-L-cysteinyl-[protein] + a 2'-deoxyguanosine in DNA. The enzyme catalyses a 4-O-methyl-thymidine in DNA + L-cysteinyl-[protein] = a thymidine in DNA + S-methyl-L-cysteinyl-[protein]. Functionally, involved in the cellular defense against the biological effects of O6-methylguanine (O6-MeG) and O4-methylthymine (O4-MeT) in DNA. Repairs the methylated nucleobase in DNA by stoichiometrically transferring the methyl group to a cysteine residue in the enzyme. This is a suicide reaction: the enzyme is irreversibly inactivated. The chain is Methylated-DNA--protein-cysteine methyltransferase from Thermococcus kodakarensis (strain ATCC BAA-918 / JCM 12380 / KOD1) (Pyrococcus kodakaraensis (strain KOD1)).